A 441-amino-acid chain; its full sequence is Ribulose bisphosphate carboxylase large chain (441 aa).

K5 carries the post-translational modification N6,N6,N6-trimethyllysine. N114 and T164 together coordinate substrate. K166 (proton acceptor) is an active-site residue. K168 provides a ligand contact to substrate. K192, D194, and E195 together coordinate Mg(2+). At K192 the chain carries N6-carboxylysine. H285 functions as the Proton acceptor in the catalytic mechanism. Positions 286, 318, and 370 each coordinate substrate.

This sequence belongs to the RuBisCO large chain family. Type I subfamily. In terms of assembly, heterohexadecamer of 8 large chains and 8 small chains; disulfide-linked. The disulfide link is formed within the large subunit homodimers. Mg(2+) serves as cofactor. Post-translationally, the disulfide bond which can form in the large chain dimeric partners within the hexadecamer appears to be associated with oxidative stress and protein turnover.

It is found in the plastid. It localises to the chloroplast. The enzyme catalyses 2 (2R)-3-phosphoglycerate + 2 H(+) = D-ribulose 1,5-bisphosphate + CO2 + H2O. It carries out the reaction D-ribulose 1,5-bisphosphate + O2 = 2-phosphoglycolate + (2R)-3-phosphoglycerate + 2 H(+). Functionally, ruBisCO catalyzes two reactions: the carboxylation of D-ribulose 1,5-bisphosphate, the primary event in carbon dioxide fixation, as well as the oxidative fragmentation of the pentose substrate in the photorespiration process. Both reactions occur simultaneously and in competition at the same active site. The polypeptide is Ribulose bisphosphate carboxylase large chain (Argyrochosma delicatula (Delicate cloak fern)).